The following is an 86-amino-acid chain: ATP synthase subunit c (86 aa).

Transmembrane regions (helical) follow at residues 13-33 (FFATGLAYLGAGISILAAGLA) and 63-83 (ILGQAMVETSGIYALIIAFIL).

This sequence belongs to the ATPase C chain family. In terms of assembly, F-type ATPases have 2 components, F(1) - the catalytic core - and F(0) - the membrane proton channel. F(1) has five subunits: alpha(3), beta(3), gamma(1), delta(1), epsilon(1). F(0) has three main subunits: a(1), b(2) and c(10-14). The alpha and beta chains form an alternating ring which encloses part of the gamma chain. F(1) is attached to F(0) by a central stalk formed by the gamma and epsilon chains, while a peripheral stalk is formed by the delta and b chains.

It is found in the cell membrane. Functionally, f(1)F(0) ATP synthase produces ATP from ADP in the presence of a proton or sodium gradient. F-type ATPases consist of two structural domains, F(1) containing the extramembraneous catalytic core and F(0) containing the membrane proton channel, linked together by a central stalk and a peripheral stalk. During catalysis, ATP synthesis in the catalytic domain of F(1) is coupled via a rotary mechanism of the central stalk subunits to proton translocation. In terms of biological role, key component of the F(0) channel; it plays a direct role in translocation across the membrane. A homomeric c-ring of between 10-14 subunits forms the central stalk rotor element with the F(1) delta and epsilon subunits. This is ATP synthase subunit c from Acholeplasma laidlawii (strain PG-8A).